A 362-amino-acid polypeptide reads, in one-letter code: Beta-ketoacyl-[acyl-carrier-protein] synthase III 2 (362 aa).

Catalysis depends on residues Cys113 and His251. Residues 252-256 (QANIR) form an ACP-binding region. Asn281 is a catalytic residue.

The protein belongs to the thiolase-like superfamily. FabH family. In terms of assembly, homodimer.

It localises to the cytoplasm. The enzyme catalyses malonyl-[ACP] + acetyl-CoA + H(+) = 3-oxobutanoyl-[ACP] + CO2 + CoA. Its pathway is lipid metabolism; fatty acid biosynthesis. Catalyzes the condensation reaction of fatty acid synthesis by the addition to an acyl acceptor of two carbons from malonyl-ACP. Catalyzes the first condensation reaction which initiates fatty acid synthesis and may therefore play a role in governing the total rate of fatty acid production. Possesses both acetoacetyl-ACP synthase and acetyl transacylase activities. Its substrate specificity determines the biosynthesis of branched-chain and/or straight-chain of fatty acids. This Vibrio cholerae serotype O1 (strain ATCC 39315 / El Tor Inaba N16961) protein is Beta-ketoacyl-[acyl-carrier-protein] synthase III 2.